Reading from the N-terminus, the 231-residue chain is Regulatory protein VanR (231 aa).

One can recognise a Response regulatory domain in the interval lysine 4–leucine 117. At aspartate 53 the chain carries 4-aspartylphosphate. The segment at residues glutamate 131–lysine 231 is a DNA-binding region (ompR/PhoB-type).

As to quaternary structure, monomer. Post-translationally, phosphorylated by VanS. Dephosphorylated by VanS. Can be phosphorylated nonenzymatically by acetyl-phosphate.

It localises to the cytoplasm. Functionally, member of the two-component regulatory system VanS/VanR. Binds to the promoter regions of target genes, including vanH and vanR; phosphorylation of VanR increases binding affinity to the vanH and vanR promoters significantly. DNA binding may be inhibited by the cognate sensor protein, VanS. Activates the transcription of vanH, vanA and vanX in response to vancomycin which results in vancomycin resistance. Involved in conferring vancomycin resistance. This is Regulatory protein VanR (vanR) from Enterococcus faecium (Streptococcus faecium).